Here is a 565-residue protein sequence, read N- to C-terminus: CTP synthase (565 aa).

An amidoligase domain region spans residues 1 to 272 (MARPKNVKHI…DLRVLKKLGL (272 aa)). A CTP-binding site is contributed by serine 18. Residue serine 18 participates in UTP binding. An ATP-binding site is contributed by 19 to 24 (SLGKGI). Tyrosine 59 lines the L-glutamine pocket. Aspartate 76 contributes to the ATP binding site. Mg(2+) contacts are provided by aspartate 76 and glutamate 146. CTP-binding positions include 153–155 (DIE), 193–198 (KTKPTQ), and lysine 229. UTP contacts are provided by residues 193–198 (KTKPTQ) and lysine 229. The Glutamine amidotransferase type-1 domain occupies 299–543 (TIGICGKYTE…VAAAKEYAHG (245 aa)). Glycine 363 lines the L-glutamine pocket. Cysteine 390 (nucleophile; for glutamine hydrolysis) is an active-site residue. L-glutamine is bound by residues 391–394 (LGMQ), glutamate 414, and arginine 471. Catalysis depends on residues histidine 516 and glutamate 518.

The protein belongs to the CTP synthase family. Homotetramer.

It catalyses the reaction UTP + L-glutamine + ATP + H2O = CTP + L-glutamate + ADP + phosphate + 2 H(+). It carries out the reaction L-glutamine + H2O = L-glutamate + NH4(+). The catalysed reaction is UTP + NH4(+) + ATP = CTP + ADP + phosphate + 2 H(+). Its pathway is pyrimidine metabolism; CTP biosynthesis via de novo pathway; CTP from UDP: step 2/2. Its activity is regulated as follows. Allosterically activated by GTP, when glutamine is the substrate; GTP has no effect on the reaction when ammonia is the substrate. The allosteric effector GTP functions by stabilizing the protein conformation that binds the tetrahedral intermediate(s) formed during glutamine hydrolysis. Inhibited by the product CTP, via allosteric rather than competitive inhibition. Catalyzes the ATP-dependent amination of UTP to CTP with either L-glutamine or ammonia as the source of nitrogen. Regulates intracellular CTP levels through interactions with the four ribonucleotide triphosphates. This Pelodictyon phaeoclathratiforme (strain DSM 5477 / BU-1) protein is CTP synthase.